A 612-amino-acid chain; its full sequence is Coagulation factor X-activating enzyme heavy chain (612 aa).

A signal peptide spans 1–20 (MMQVLLVTISLAVFPYQGSS). Positions 21–193 (IILESGNVND…KKASQLVATS (173 aa)) are cleaved as a propeptide — or 194. The 195-residue stretch at 201 to 395 (TFIELVIVVD…YKPKCILNPP (195 aa)) folds into the Peptidase M12B domain. Residue E204 coordinates Ca(2+). Residue N259 is glycosylated (N-linked (GlcNAc...) asparagine). D286 contributes to the Ca(2+) binding site. Cystine bridges form between C310–C390, C350–C374, and C352–C357. H335 serves as a coordination point for Zn(2+). E336 is an active-site residue. 2 residues coordinate Zn(2+): H339 and H345. 2 N-linked (GlcNAc...) asparagine glycosylation sites follow: N353 and N373. Residues C390, N393, I405, N408, E412, E415, and D418 each coordinate Ca(2+). The 87-residue stretch at 403–489 (PPICGNEIWE…ECPADGFHAN (87 aa)) folds into the Disintegrin domain. The cysteines at positions 461 and 481 are disulfide-linked. Positions 467 to 469 (ECD) match the D/ECD-tripeptide motif.

This sequence belongs to the venom metalloproteinase (M12B) family. P-III subfamily. P-IIId sub-subfamily. In terms of assembly, heterotrimer; disulfide-linked. The heterotrimer consists of 1 heavy chain and 2 light chains (lectins): LC1 and LC2 (AC Q7T045 and AC Q696W1). The cofactor is Zn(2+). In terms of processing, N-glycosylated. Contains 8.0% of hexoses, 2.5% of hexosamines and 2.5% of sialic acids. In terms of tissue distribution, expressed by the venom gland.

It localises to the secreted. The catalysed reaction is Specifically activates several components of the blood clotting system, including coagulation factor X, coagulation factor IX and protein C by cleavage of Arg-|-Xaa bonds. Has no action on insulin B chain.. Calcium is required for the activity of the heterotrimer. Its function is as follows. Catalytic subunit of blood coagulation factor X-activating enzyme. Activates coagulation factor X (F10) by cleaving the Arg(234)-Ile(235) bond, activates coagulation factor IX (F9) by cleaving the Arg(226)-Val(227) bond and is also able to activate protein C (PROC). This Macrovipera lebetinus (Levantine viper) protein is Coagulation factor X-activating enzyme heavy chain.